We begin with the raw amino-acid sequence, 251 residues long: Imidazole glycerol phosphate synthase subunit HisF (251 aa).

Residues D11 and D130 contribute to the active site.

This sequence belongs to the HisA/HisF family. Heterodimer of HisH and HisF.

The protein resides in the cytoplasm. The enzyme catalyses 5-[(5-phospho-1-deoxy-D-ribulos-1-ylimino)methylamino]-1-(5-phospho-beta-D-ribosyl)imidazole-4-carboxamide + L-glutamine = D-erythro-1-(imidazol-4-yl)glycerol 3-phosphate + 5-amino-1-(5-phospho-beta-D-ribosyl)imidazole-4-carboxamide + L-glutamate + H(+). Its pathway is amino-acid biosynthesis; L-histidine biosynthesis; L-histidine from 5-phospho-alpha-D-ribose 1-diphosphate: step 5/9. In terms of biological role, IGPS catalyzes the conversion of PRFAR and glutamine to IGP, AICAR and glutamate. The HisF subunit catalyzes the cyclization activity that produces IGP and AICAR from PRFAR using the ammonia provided by the HisH subunit. This chain is Imidazole glycerol phosphate synthase subunit HisF, found in Chlorobium limicola (strain DSM 245 / NBRC 103803 / 6330).